Here is a 682-residue protein sequence, read N- to C-terminus: Zinc finger protein 16 (682 aa).

The segment covering 1 to 10 (MPSLRTRREE) has biased composition (basic and acidic residues). The segment at 1 to 38 (MPSLRTRREEAEMELSAPGPSPWTPAAQARVSDAPAVT) is disordered. Residues 62 to 210 (YQQPDCDTRT…GVPTAESPLI (149 aa)) form a necessary for transcription activation region. A C2H2-type 1; degenerate zinc finger spans residues 209–231 (LICNECGKTFRGNPDLIQRQIVH). A C2H2-type 2; degenerate zinc finger spans residues 237–259 (FMCDDCGKTFSQNSVLKNRHRSH). A Glycyl lysine isopeptide (Lys-Gly) (interchain with G-Cter in SUMO2) cross-link involves residue Lys253. C2H2-type zinc fingers lie at residues 265-287 (YQCSECGKAFRGHSDFSRHQSHH), 293-315 (YTCTECGKAFSQNSSLKKHQKSH), 321-343 (YECNECGKAFRRSSNLIQHQRIH), 349-371 (YVCSECGKAFRRSSNLIKHHRTH), 377-399 (FECGECGKAFSQSAHLRKHQRVH), 405-427 (YECNDCGKPFSRVSNLIKHHRVH), 433-455 (YKCSDCGKXFSQSSSLIQHRRIH), and 461-483 (HVCNVCGKAFSYSSVLRKHQIIH). Required for nuclear localization stretches follow at residues 268 to 393 (SECG…AHLR) and 341 to 373 (RIHSGEKPYVCSECGKAFRRSSNLIKHHRTHTG). The tract at residues 473–503 (SSVLRKHQIIHTGEKPYRCSVCGKAFSHSSA) is required for nuclear localization. Position 487 is an N6-acetyllysine (Lys487). 7 consecutive C2H2-type zinc fingers follow at residues 489–511 (YRCSVCGKAFSHSSALIQHQGVH), 517–539 (YACHECGKTFGRSSNLILHQRVH), 545–567 (YECTECGKTFSQSSTLIQHQRIH), 573–595 (HECNQCGKAFNRSSNLIHHQKVH), 601–623 (YTCVECGKGFSQSSHLIQHQIIH), 629–651 (YKCSECGKAFSQRSVLIQHQRIH), and 657–679 (YDCAACGKAFSQRSKLIKHQLIH).

This sequence belongs to the krueppel C2H2-type zinc-finger protein family. In terms of assembly, interacts with INCA1; the interaction inhibits INCA1 activity and induces the cell cycle process.

Its subcellular location is the nucleus. In terms of biological role, acts as a transcriptional activator. Promotes cell proliferation by facilitating the cell cycle phase transition from the S to G2/M phase. Involved in both the hemin- and phorbol myristate acetate (PMA)-induced erythroid and megakaryocytic differentiation, respectively. Also plays a role as an inhibitor of cell apoptosis. The sequence is that of Zinc finger protein 16 (ZNF16) from Pan troglodytes (Chimpanzee).